The following is a 262-amino-acid chain: Nitrilase (262 aa).

Residues valine 2 to leucine 237 form the CN hydrolase domain. The active-site Proton acceptor is the glutamate 42. Residue lysine 113 is the Proton donor of the active site. Cysteine 146 (nucleophile) is an active-site residue. Residue valine 173–methionine 174 coordinates substrate.

This sequence belongs to the carbon-nitrogen hydrolase superfamily. As to quaternary structure, homodimer.

The catalysed reaction is a nitrile + 2 H2O = a carboxylate + NH4(+). Its activity is regulated as follows. Enzymatic activity is inhibited in the presence of acetone, methanol and metal ions such as Ag(2+) and Hg(2+). Is also inhibited by various thiol reagents such as DTNB, p-chloromercuribenzoate, p-hydroxymercuribenzoate, iodacetamide and iodacetate. EDTA has no influence on activity. Functionally, nitrilase that hydrolyzes preferentially aliphatic nitriles like malononitrile and fumaronitrile in vitro. These dinitriles are converted to the corresponding monoacid mononitriles, showing the enzyme is regioselective. Cannot hydrolyze compounds with a nitrile group bound to an aromatic ring or amino acid. Its biological role is unknown. This chain is Nitrilase, found in Pyrococcus abyssi (strain GE5 / Orsay).